Here is a 231-residue protein sequence, read N- to C-terminus: 7-cyano-7-deazaguanine synthase (231 aa).

Residue 8-18 (FSGGQDSTTCL) participates in ATP binding. Cys-188, Cys-197, Cys-200, and Cys-203 together coordinate Zn(2+).

Belongs to the QueC family. Requires Zn(2+) as cofactor.

The catalysed reaction is 7-carboxy-7-deazaguanine + NH4(+) + ATP = 7-cyano-7-deazaguanine + ADP + phosphate + H2O + H(+). The protein operates within purine metabolism; 7-cyano-7-deazaguanine biosynthesis. In terms of biological role, catalyzes the ATP-dependent conversion of 7-carboxy-7-deazaguanine (CDG) to 7-cyano-7-deazaguanine (preQ(0)). This chain is 7-cyano-7-deazaguanine synthase, found in Sodalis glossinidius (strain morsitans).